Here is a 489-residue protein sequence, read N- to C-terminus: CUGBP Elav-like family member 1-B (489 aa).

RRM domains lie at 16–99, 108–188, and 404–482; these read IKMF…PADS, RKLF…FADT, and ANLF…LKRS.

The protein belongs to the CELF/BRUNOL family. Oligomer. Oligomerization is required for RNA-binding and EDEN-dependent deadenylation. In terms of processing, phosphorylated during oocyte maturation and dephosphorylated following egg activation. Dephosphorylation is calcium dependent and correlates with the increase in the activity of EDEN-dependent deadenylation.

The protein resides in the nucleus. It is found in the cytoplasm. Functionally, RNA-binding protein implicated in the regulation of several post-transcriptional events. May be involved in pre-mRNA alternative splicing, mRNA translation activation and stability. Mediates the rapid and sequence-specific cytoplasmic deadenylation of EDEN-containing maternal mRNAs following fertilization. Binds to AU-rich sequences (AREs) of jun mRNA. Binds to the embryonic deadenylation element (EDEN) motif localized in the 3'-UTR of maternal mRNAs. Binds to RNA containing several repeats of the consensus sequence 5'-UGU-3'. EDEN-dependent deadenylation is enhanced by the presence of an additional cis element composed of three AUU repeats. This Xenopus laevis (African clawed frog) protein is CUGBP Elav-like family member 1-B (cugbp1-b).